The chain runs to 764 residues: Kinesin-like protein KIN-14N (764 aa).

The segment at 1-50 (MSTRATRPGMLHQKENAADAQAGKRQRTAAGSAARAPLSANAAPPAPDPA) is disordered. Residues 29–50 (AAGSAARAPLSANAAPPAPDPA) show a composition bias toward low complexity. Positions 105-416 (AEIGKLNGLL…RLHNTILELK (312 aa)) form a coiled coil. In terms of domain architecture, Kinesin motor spans 418–747 (NIRVFCRVRP…LRFAARVNSC (330 aa)). 498 to 505 (GQTGSGKT) serves as a coordination point for ATP.

It belongs to the TRAFAC class myosin-kinesin ATPase superfamily. Kinesin family. KIN-14 subfamily.

The sequence is that of Kinesin-like protein KIN-14N from Oryza sativa subsp. japonica (Rice).